Reading from the N-terminus, the 572-residue chain is E3 SUMO-protein ligase PIAS2 (572 aa).

Positions 11 to 45 constitute an SAP domain; sequence VSSFRVSELQVLLGFAGRNKSGRKHDLLMRALHLL. The LXXLL motif motif lies at 19 to 23; sequence LQVLL. Residues K46 and K249 each participate in a glycyl lysine isopeptide (Lys-Gly) (interchain with G-Cter in SUMO2) cross-link. One can recognise a PINIT domain in the interval 134–299; that stretch reads QPSPPIPPVH…SMSVYLVRQL (166 aa). The segment at 331–412 adopts an SP-RING-type zinc-finger fold; that stretch reads PDSEIATTSL…FMEILNDCSD (82 aa). Residues C362, H364, C385, and C388 each coordinate Zn(2+). Glycyl lysine isopeptide (Lys-Gly) (interchain with G-Cter in SUMO2) cross-links involve residues K430, K435, K443, and K452. An SUMO1-binding region spans residues 467 to 473; that stretch reads IDVIDLT. S476, S477, and S478 each carry phosphoserine. Positions 484–492 match the Nuclear localization signal motif; it reads PPAKRKCIF. Residue K489 forms a Glycyl lysine isopeptide (Lys-Gly) (interchain with G-Cter in SUMO2) linkage. Residue S499 is modified to Phosphoserine. Residue K502 forms a Glycyl lysine isopeptide (Lys-Gly) (interchain with G-Cter in SUMO2) linkage. The tract at residues 523–572 is disordered; sequence AAIPPSLTDYSVPFHHTPVSSMSSDLPGEQRRNDINNEVQLGTSSDTVQQ. Positions 558–572 are enriched in polar residues; that stretch reads NNEVQLGTSSDTVQQ.

The protein belongs to the PIAS family. In terms of assembly, binds SUMO1 and UBE2I. Interacts with AXIN1, JUN, MDM2, PARK7, TP53 and TP73 isoform alpha, but not TP73 isoform beta. Interacts with STAT4 following IL12 and IFN-alpha stimulation of T-cells. Interacts also with GTF2I, GTF2IRD1, IKFZ1, DAB2 and MSX2, as well as with several steroid receptors, including ESR1, ESR2, NR3C1, PGR, AR, and with NCOA2. Sumoylation of a target protein seems to enhance the interaction. Binds to sumoylated ELK1. Binds DNA, such as CDKN1A promoter, in a sequence-specific manner. Interacts with PLAG1. Interacts with KLF8; the interaction results in SUMO ligation and repression of KLF8 transcriptional activity and of its cell cycle progression into G(1) phase. Interacts with IFIH1/MDA5. Interacts with PML. Interacts with PRDM1. In terms of processing, sumoylated. As to expression, mainly expressed in testis.

The protein resides in the nucleus speckle. The protein localises to the nucleus. It localises to the PML body. It functions in the pathway protein modification; protein sumoylation. Functions as an E3-type small ubiquitin-like modifier (SUMO) ligase, stabilizing the interaction between UBE2I and the substrate, and as a SUMO-tethering factor. Plays a crucial role as a transcriptional coregulation in various cellular pathways, including the STAT pathway, the p53 pathway and the steroid hormone signaling pathway. The effects of this transcriptional coregulation, transactivation or silencing may vary depending upon the biological context and PIAS2 isoform studied. However, it seems to be mostly involved in gene silencing. Binds to sumoylated ELK1 and enhances its transcriptional activity by preventing recruitment of HDAC2 by ELK1, thus reversing SUMO-mediated repression of ELK1 transactivation activity. Sumoylates PML at'Lys-65' and 'Lys-160'. The polypeptide is E3 SUMO-protein ligase PIAS2 (Pias2) (Rattus norvegicus (Rat)).